Here is a 193-residue protein sequence, read N- to C-terminus: Mesogenin-1 (193 aa).

A disordered region spans residues Gly-34 to Ser-59. Residues Gln-40–Ser-59 show a composition bias toward low complexity. Positions Gln-124–Leu-178 constitute a bHLH domain.

The protein localises to the nucleus. Functionally, involved in specifying the paraxial, but not dorsal, mesoderm. May regulate the expression of T-box transcription factors required for mesoderm formation and differentiation. The polypeptide is Mesogenin-1 (MSGN1) (Homo sapiens (Human)).